The primary structure comprises 1013 residues: Dichlorochromopyrrolate synthase (1013 aa).

This sequence belongs to the RebD family. Homodimer. It depends on heme as a cofactor.

It catalyses the reaction 2 3-(7-chloroindol-3-yl)-2-iminopropanoate + H2O2 = dichlorochromopyrrolate + NH4(+) + 2 H2O + H(+). It carries out the reaction 2 2-iminio-3-(indol-3-yl)propanoate + H2O2 = chromopyrrolate + NH4(+) + 2 H2O + H(+). The enzyme catalyses 2 H2O2 = O2 + 2 H2O. In terms of biological role, involved in the biosynthesis of the indolocarbazole antitumor agent rebeccamycin. Catalyzes the hydrogen peroxide-dependent dimerization of two L-tryptophan-derived molecules (imine form of indole 3-pyruvate (IPA)), to form dichlorochromopyrrolic acid (CPA), the precursor for the six-ring bisindolopyrrolocarbazole scaffold of the rebeccamycin. The hydrogen peroxide is provided together with iminoindolpropanoate by RebO. Due to the instability of indole 3-pyruvate (IPA), which is hydrolyzed in solution and exits in equilibrium with the predominant ketone form of IPA, the concerted functioning of the RebO/RebD system appears to prevent the buildup of significant amounts of IPA and its imine in solution, effectively shepherding the imine further down the biosynthetic chain. The chain is Dichlorochromopyrrolate synthase (rebD) from Lentzea aerocolonigenes (Lechevalieria aerocolonigenes).